Reading from the N-terminus, the 757-residue chain is Alcohol dehydrogenase (quinone), dehydrogenase subunit (757 aa).

The signal sequence occupies residues 1–34 (MTSGLLTPIKVTKKRLLSCAAALAFSAAVPVAFA). Pyrrolidone carboxylic acid is present on Gln-35. Glu-95 contributes to the pyrroloquinoline quinone binding site. The cysteines at positions 141 and 142 are disulfide-linked. Pyrroloquinoline quinone is bound at residue Arg-147. Residue Glu-215 participates in Ca(2+) binding. A pyrroloquinoline quinone-binding site is contributed by Thr-277. The Ca(2+) site is built by Asn-297 and Asp-342. The Proton acceptor role is filled by Asp-342. Pyrroloquinoline quinone is bound by residues Lys-369 and Ile-588. A Cytochrome c domain is found at 640–719 (ARQKDGYFMY…DIRNFIVKRA (80 aa)). Residues Cys-653, Cys-656, His-657, and Met-696 each coordinate heme c. The segment at 726–757 (EVKARENSTGVPNDQFLNVPQSTADVPTADHP) is disordered. Polar residues predominate over residues 732–750 (NSTGVPNDQFLNVPQSTAD).

It belongs to the bacterial PQQ dehydrogenase family. As to quaternary structure, the alcohol dehydrogenase multicomponent enzyme system is composed of a dehydrogenase subunit I (AdhA), a cytochrome c subunit II (AdhB) and a subunit III (AdhS). The cofactor is pyrroloquinoline quinone. Ca(2+) is required as a cofactor. Heme c serves as cofactor.

The protein resides in the cell membrane. It catalyses the reaction ethanol + a ubiquinone = a ubiquinol + acetaldehyde. 2,6-dichloro-4-dicyanovinylphenol (PC16) and antimycin A inhibit ubiquinol oxidation activity more selectively than the ubiquinone reductase activity. Functionally, dehydrogenase component of the alcohol dehydrogenase multicomponent enzyme system which is involved in the production of acetic acid and in the ethanol oxidase respiratory chain. Quinohemoprotein alcohol dehydrogenase (ADH) catalyzes the oxidation of ethanol to acetaldehyde by transferring electrons to the ubiquinone embedded in the membrane phospholipids. The electrons transfer from ethanol to membranous ubiquinone occurs from pyrroloquinoline quinone (PQQ) to one heme c in subunit I (AdhA), and finally to two heme c in subunit II (AdhB). Besides ubiquinone reduction, ADH also has a ubiquinol (QH2) oxidation reaction which mediates electron transfer from ubiquinol to the non-energy generating bypass oxidase system. The electrons transfer occurs from ubiquinol (QH2) to the additional heme c within subunit II (AdhB). Also able to use quinone analogs such as 2,3-dimethoxy-5-methyl-6-n-decyl-1,4-benzoquinone (DB) and 2,3-dimethoxy-5-methyl-6-n-pentyl-1,4-benzoquinone (PB). This Gluconobacter oxydans (strain 621H) (Gluconobacter suboxydans) protein is Alcohol dehydrogenase (quinone), dehydrogenase subunit.